Here is a 144-residue protein sequence, read N- to C-terminus: Large ribosomal subunit protein uL16 (144 aa).

This sequence belongs to the universal ribosomal protein uL16 family. As to quaternary structure, part of the 50S ribosomal subunit.

Binds 23S rRNA and is also seen to make contacts with the A and possibly P site tRNAs. The protein is Large ribosomal subunit protein uL16 of Caldanaerobacter subterraneus subsp. tengcongensis (strain DSM 15242 / JCM 11007 / NBRC 100824 / MB4) (Thermoanaerobacter tengcongensis).